The sequence spans 389 residues: tRNA-specific 2-thiouridylase MnmA (389 aa).

ATP is bound by residues 33–40 (GLSGGVDS) and Leu-59. Cys-120 (nucleophile) is an active-site residue. Cys-120 and Cys-219 form a disulfide bridge. Gly-145 contacts ATP. The interaction with tRNA stretch occupies residues 169–171 (KDQ). Cys-219 functions as the Cysteine persulfide intermediate in the catalytic mechanism. The interaction with tRNA stretch occupies residues 326-327 (RY).

The protein belongs to the MnmA/TRMU family.

It localises to the cytoplasm. The catalysed reaction is S-sulfanyl-L-cysteinyl-[protein] + uridine(34) in tRNA + AH2 + ATP = 2-thiouridine(34) in tRNA + L-cysteinyl-[protein] + A + AMP + diphosphate + H(+). In terms of biological role, catalyzes the 2-thiolation of uridine at the wobble position (U34) of tRNA, leading to the formation of s(2)U34. The polypeptide is tRNA-specific 2-thiouridylase MnmA (Synechococcus sp. (strain WH7803)).